The chain runs to 361 residues: Phosphoserine aminotransferase (361 aa).

R43 provides a ligand contact to L-glutamate. Residues 77 to 78, W103, T153, D173, and Q196 contribute to the pyridoxal 5'-phosphate site; that span reads AS. Residue K197 is modified to N6-(pyridoxal phosphate)lysine. 238 to 239 lines the pyridoxal 5'-phosphate pocket; sequence NT.

The protein belongs to the class-V pyridoxal-phosphate-dependent aminotransferase family. SerC subfamily. In terms of assembly, homodimer. Requires pyridoxal 5'-phosphate as cofactor.

Its subcellular location is the cytoplasm. The catalysed reaction is O-phospho-L-serine + 2-oxoglutarate = 3-phosphooxypyruvate + L-glutamate. It carries out the reaction 4-(phosphooxy)-L-threonine + 2-oxoglutarate = (R)-3-hydroxy-2-oxo-4-phosphooxybutanoate + L-glutamate. It participates in amino-acid biosynthesis; L-serine biosynthesis; L-serine from 3-phospho-D-glycerate: step 2/3. It functions in the pathway cofactor biosynthesis; pyridoxine 5'-phosphate biosynthesis; pyridoxine 5'-phosphate from D-erythrose 4-phosphate: step 3/5. Its function is as follows. Catalyzes the reversible conversion of 3-phosphohydroxypyruvate to phosphoserine and of 3-hydroxy-2-oxo-4-phosphonooxybutanoate to phosphohydroxythreonine. This chain is Phosphoserine aminotransferase, found in Pseudomonas paraeruginosa (strain DSM 24068 / PA7) (Pseudomonas aeruginosa (strain PA7)).